The primary structure comprises 488 residues: ATP synthase subunit beta (488 aa).

Residue glycine 164–threonine 171 coordinates ATP.

It belongs to the ATPase alpha/beta chains family. As to quaternary structure, F-type ATPases have 2 components, CF(1) - the catalytic core - and CF(0) - the membrane proton channel. CF(1) has five subunits: alpha(3), beta(3), gamma(1), delta(1), epsilon(1). CF(0) has four main subunits: a(1), b(1), b'(1) and c(9-12).

Its subcellular location is the cellular thylakoid membrane. It catalyses the reaction ATP + H2O + 4 H(+)(in) = ADP + phosphate + 5 H(+)(out). Its function is as follows. Produces ATP from ADP in the presence of a proton gradient across the membrane. The catalytic sites are hosted primarily by the beta subunits. The chain is ATP synthase subunit beta from Prochlorococcus marinus (strain MIT 9303).